A 91-amino-acid polypeptide reads, in one-letter code: Small ribosomal subunit protein uS17 (91 aa).

Belongs to the universal ribosomal protein uS17 family. In terms of assembly, part of the 30S ribosomal subunit.

Its function is as follows. One of the primary rRNA binding proteins, it binds specifically to the 5'-end of 16S ribosomal RNA. In Salinispora tropica (strain ATCC BAA-916 / DSM 44818 / JCM 13857 / NBRC 105044 / CNB-440), this protein is Small ribosomal subunit protein uS17.